A 61-amino-acid chain; its full sequence is Cobrotoxin-b (61 aa).

Disulfide bonds link C3-C23, C17-C40, C42-C53, and C54-C59.

The protein belongs to the three-finger toxin family. Short-chain subfamily. Type I alpha-neurotoxin sub-subfamily. Expressed by the venom gland.

It localises to the secreted. Produces peripheral paralysis by blocking neuromuscular transmission at the postsynaptic site. Binds to the nicotinic acetylcholine receptor. This Naja kaouthia (Monocled cobra) protein is Cobrotoxin-b.